The sequence spans 101 residues: Acylphosphatase (101 aa).

An Acylphosphatase-like domain is found at 13–101 (RARILVRGVV…GEFRGFEIRY (89 aa)). Active-site residues include Arg28 and Asn46.

The protein belongs to the acylphosphatase family.

The enzyme catalyses an acyl phosphate + H2O = a carboxylate + phosphate + H(+). The chain is Acylphosphatase (acyP) from Aeropyrum pernix (strain ATCC 700893 / DSM 11879 / JCM 9820 / NBRC 100138 / K1).